Here is a 197-residue protein sequence, read N- to C-terminus: Protein jagunal (197 aa).

Residues 1–39 (MATRGGPMVAGTDGNDFEFRQRVAGTYQISLLNKSRLKY) are Cytoplasmic-facing. A helical membrane pass occupies residues 40–60 (CIFFHALLFFVMLAKLTSDIL). The Lumenal segment spans residues 61 to 78 (DHLDIFVLEIEELEVPPP). The helical transmembrane segment at 79 to 99 (LWWEYVWAASLLTSFLGLSAA) threads the bilayer. The Cytoplasmic portion of the chain corresponds to 100–109 (RGNKVREMQK). A helical transmembrane segment spans residues 110-130 (YMVAILLFAILPLFYCFAYYF). Residues 131–159 (SDVWEFATLDKSVELDETDIFVWRGYPYG) lie on the Lumenal side of the membrane. A helical membrane pass occupies residues 160 to 180 (VFWYAFCFVGFQVHGFTLYFA). Residues 181–197 (YNLVKAWKARTATRKFQ) lie on the Cytoplasmic side of the membrane.

Belongs to the jagunal family.

It localises to the endoplasmic reticulum membrane. Required for endoplasmic reticulum organization and proper vesicular traffic during vitellogenesis. Required for oocyte and bristle growth. The chain is Protein jagunal from Drosophila melanogaster (Fruit fly).